The following is a 139-amino-acid chain: Ribulose bisphosphate carboxylase small subunit (139 aa).

The protein belongs to the RuBisCO small chain family. In terms of assembly, heterohexadecamer of 8 large and 8 small subunits.

It is found in the plastid. Its subcellular location is the chloroplast. Its function is as follows. RuBisCO catalyzes two reactions: the carboxylation of D-ribulose 1,5-bisphosphate, the primary event in carbon dioxide fixation, as well as the oxidative fragmentation of the pentose substrate in the photorespiration process. Both reactions occur simultaneously and in competition at the same active site. Although the small subunit is not catalytic it is essential for maximal activity. The polypeptide is Ribulose bisphosphate carboxylase small subunit (Detonula confervacea (Marine diatom)).